Reading from the N-terminus, the 176-residue chain is Crossover junction endodeoxyribonuclease RuvC (176 aa).

Active-site residues include Asp-7, Glu-67, and Asp-139. Asp-7, Glu-67, and Asp-139 together coordinate Mg(2+).

Belongs to the RuvC family. Homodimer which binds Holliday junction (HJ) DNA. The HJ becomes 2-fold symmetrical on binding to RuvC with unstacked arms; it has a different conformation from HJ DNA in complex with RuvA. In the full resolvosome a probable DNA-RuvA(4)-RuvB(12)-RuvC(2) complex forms which resolves the HJ. Mg(2+) is required as a cofactor.

It localises to the cytoplasm. The enzyme catalyses Endonucleolytic cleavage at a junction such as a reciprocal single-stranded crossover between two homologous DNA duplexes (Holliday junction).. In terms of biological role, the RuvA-RuvB-RuvC complex processes Holliday junction (HJ) DNA during genetic recombination and DNA repair. Endonuclease that resolves HJ intermediates. Cleaves cruciform DNA by making single-stranded nicks across the HJ at symmetrical positions within the homologous arms, yielding a 5'-phosphate and a 3'-hydroxyl group; requires a central core of homology in the junction. The consensus cleavage sequence is 5'-(A/T)TT(C/G)-3'. Cleavage occurs on the 3'-side of the TT dinucleotide at the point of strand exchange. HJ branch migration catalyzed by RuvA-RuvB allows RuvC to scan DNA until it finds its consensus sequence, where it cleaves and resolves the cruciform DNA. The sequence is that of Crossover junction endodeoxyribonuclease RuvC from Pelobacter propionicus (strain DSM 2379 / NBRC 103807 / OttBd1).